The sequence spans 471 residues: Proton-coupled amino acid transporter-like protein pathetic (471 aa).

Asparagine 61 carries N-linked (GlcNAc...) asparagine glycosylation. 10 helical membrane passes run 81–101 (FAFM…TAFI), 153–173 (ILFG…VIVA), 187–207 (AVSL…IAWV), 216–236 (VSMV…YYLV), 253–273 (LPQF…VMPL), 283–303 (FLGI…IYML), 337–357 (LISL…LEII), 375–395 (VLRT…PTIG), 397–417 (FMGL…PVVI), and 432–452 (WILW…VFGT).

This sequence belongs to the amino acid/polyamine transporter 2 family. In terms of tissue distribution, in third instar larvae, expressed at highest levels in the brain and digestive system with particularly high levels in surface glia of the brain (at protein level). In third instar larvae, expressed in all cells of the body wall (at protein level). Within the body wall of third instar larvae, most highly expressed in epithelial cells and sensory neurons. Expressed at a similar level in all da neurons (at protein level). Widely expressed during embryonic and late larval stages. Levels are highly dynamic in embryogenesis with surges of expression in many structures, including muscle primordia, salivary glands, proventriculus, trachea and gonads. Expressed in all or most cells of larval imaginal disks. Expression is also particularly strong in the pouch and hinge regions of the wing disk and in the morphogenetic furrow of the eye disk.

It is found in the cell membrane. Its subcellular location is the lysosome membrane. The protein resides in the late endosome membrane. The protein localises to the cell projection. It localises to the axon. It is found in the dendrite. Its subcellular location is the perikaryon. The protein resides in the cytoplasm. Amino acid transporter which has pH-dependent electrogenic transport activity for alanine and glycine but not for proline. Plays a role in positive regulation of growth by directly or indirectly modulating the effects of the TOR signaling pathway. Required in a cell-autonomous manner for dendrite growth in neurons with large dendrite arbors. The sequence is that of Proton-coupled amino acid transporter-like protein pathetic from Drosophila melanogaster (Fruit fly).